Reading from the N-terminus, the 908-residue chain is Putative cell signaling protein HAM1 (908 aa).

Disordered stretches follow at residues 1 to 24 (MSVA…SAVS) and 177 to 359 (TKAA…EHRQ). 5 stretches are compositionally biased toward basic and acidic residues: residues 179–192 (AADK…KLDS), 231–247 (HPRD…DKGK), 261–283 (AKSD…KETG), 306–321 (EQKE…KRDA), and 338–359 (NQEK…EHRQ). A coiled-coil region spans residues 255–282 (YNQAQEAKSDAQSKAQDLKSSARDYKET).

Post-translationally, palmitoylated.

Functionally, may act as a negative regulator of mating during vegetative growth. The protein is Putative cell signaling protein HAM1 of Cryptococcus neoformans var. grubii serotype A (strain H99 / ATCC 208821 / CBS 10515 / FGSC 9487) (Filobasidiella neoformans var. grubii).